Consider the following 618-residue polypeptide: Probable Xaa-Pro aminopeptidase P (618 aa).

Mn(2+)-binding residues include Asp-415, Asp-426, Glu-524, and Glu-538.

This sequence belongs to the peptidase M24B family. It depends on Mn(2+) as a cofactor.

The catalysed reaction is Release of any N-terminal amino acid, including proline, that is linked to proline, even from a dipeptide or tripeptide.. Functionally, catalyzes the removal of a penultimate prolyl residue from the N-termini of peptides. The polypeptide is Probable Xaa-Pro aminopeptidase P (AMPP) (Pyricularia oryzae (strain 70-15 / ATCC MYA-4617 / FGSC 8958) (Rice blast fungus)).